We begin with the raw amino-acid sequence, 237 residues long: Ribosomal RNA small subunit methyltransferase G (237 aa).

S-adenosyl-L-methionine-binding positions include Gly78, Phe83, Ala129–Glu130, and Arg148.

It belongs to the methyltransferase superfamily. RNA methyltransferase RsmG family.

It localises to the cytoplasm. Specifically methylates the N7 position of a guanine in 16S rRNA. This is Ribosomal RNA small subunit methyltransferase G from Streptococcus pyogenes serotype M1.